Consider the following 198-residue polypeptide: Recombination protein RecR (198 aa).

A C4-type zinc finger spans residues Cys57–Cys72. The 96-residue stretch at Ser80–Ser175 folds into the Toprim domain.

The protein belongs to the RecR family.

In terms of biological role, may play a role in DNA repair. It seems to be involved in an RecBC-independent recombinational process of DNA repair. It may act with RecF and RecO. This chain is Recombination protein RecR, found in Staphylococcus haemolyticus (strain JCSC1435).